The sequence spans 193 residues: Xanthine phosphoribosyltransferase (193 aa).

Xanthine contacts are provided by leucine 20 and asparagine 27. 129 to 133 (ANGKA) contributes to the 5-phospho-alpha-D-ribose 1-diphosphate binding site. Lysine 157 serves as a coordination point for xanthine.

This sequence belongs to the purine/pyrimidine phosphoribosyltransferase family. Xpt subfamily. As to quaternary structure, homodimer.

It is found in the cytoplasm. It carries out the reaction XMP + diphosphate = xanthine + 5-phospho-alpha-D-ribose 1-diphosphate. It participates in purine metabolism; XMP biosynthesis via salvage pathway; XMP from xanthine: step 1/1. Its function is as follows. Converts the preformed base xanthine, a product of nucleic acid breakdown, to xanthosine 5'-monophosphate (XMP), so it can be reused for RNA or DNA synthesis. In Bifidobacterium animalis subsp. lactis (strain AD011), this protein is Xanthine phosphoribosyltransferase.